A 281-amino-acid chain; its full sequence is UPF0162 protein PD_0709 (281 aa).

TPR repeat units lie at residues 193–226 (VRIL…VPNQ) and 227–260 (PEAL…YPST).

The protein belongs to the UPF0162 family.

The protein is UPF0162 protein PD_0709 of Xylella fastidiosa (strain Temecula1 / ATCC 700964).